The primary structure comprises 106 residues: MPFLDIQKRFGLNIDRWLTIQSAEQPYKMAGRCHAFEKEWIECAHGIGYTRAEKECKIEYDDFVECLLRQKTMRRAGTIRKQRDKLIKEGKYTPPPHHIGKGEPRP.

A CHCH domain is found at 30–74 (AGRCHAFEKEWIECAHGIGYTRAEKECKIEYDDFVECLLRQKTMR). Short sequence motifs (cx9C motif) lie at residues 33–43 (CHAFEKEWIEC) and 56–66 (CKIEYDDFVEC). 2 disulfides stabilise this stretch: cysteine 33/cysteine 66 and cysteine 43/cysteine 56. The segment at 84–106 (DKLIKEGKYTPPPHHIGKGEPRP) is disordered.

The protein belongs to the complex I NDUFS5 subunit family. Mammalian complex I is composed of 45 different subunits. This is a component of the iron-sulfur (IP) fragment of the enzyme.

It is found in the mitochondrion inner membrane. Its subcellular location is the mitochondrion intermembrane space. In terms of biological role, accessory subunit of the mitochondrial membrane respiratory chain NADH dehydrogenase (Complex I), that is believed not to be involved in catalysis. Complex I functions in the transfer of electrons from NADH to the respiratory chain. The immediate electron acceptor for the enzyme is believed to be ubiquinone. The chain is NADH dehydrogenase [ubiquinone] iron-sulfur protein 5 (NDUFS5) from Gorilla gorilla gorilla (Western lowland gorilla).